The chain runs to 336 residues: MEDFIKGLAERVLEGEKLSKEDGLKILSIPDEYLDLLVQEASKVREAVFGDEVEFCSLINAKNGACSEDCSFCAQSSKYPTPINAYGLVPKKELVEGAQKAVSIKANRYCIVTSGKRATKEEVEQIADAVREITENLPVRVCVSIGTVDEEDLKLLKDSGVDRVNHNLETSERHFKNIVTTHSYKERLETIKTVQKVGLSTCTGGIFGIGETDEDIVDLASVYRELNVNSIPMNFLIPIPGTPLEGNKQLTPQRCLKIISLFKLFNPQAELRLCGGREINLREYHDTAMEIANCVMAGGYLTRAGRAPGKDEEMVRRLGRKLITGRDLFSKYKTAV.

The region spanning 48-277 is the Radical SAM core domain; it reads VFGDEVEFCS…QAELRLCGGR (230 aa). C66, C70, and C73 together coordinate [4Fe-4S] cluster. The [2Fe-2S] cluster site is built by C110, C142, C202, and R272.

This sequence belongs to the radical SAM superfamily. Biotin synthase family. In terms of assembly, homodimer. It depends on [4Fe-4S] cluster as a cofactor. [2Fe-2S] cluster is required as a cofactor.

The catalysed reaction is (4R,5S)-dethiobiotin + (sulfur carrier)-SH + 2 reduced [2Fe-2S]-[ferredoxin] + 2 S-adenosyl-L-methionine = (sulfur carrier)-H + biotin + 2 5'-deoxyadenosine + 2 L-methionine + 2 oxidized [2Fe-2S]-[ferredoxin]. It participates in cofactor biosynthesis; biotin biosynthesis; biotin from 7,8-diaminononanoate: step 2/2. Its function is as follows. Catalyzes the conversion of dethiobiotin (DTB) to biotin by the insertion of a sulfur atom into dethiobiotin via a radical-based mechanism. The chain is Biotin synthase from Persephonella marina (strain DSM 14350 / EX-H1).